The following is a 148-amino-acid chain: Large ribosomal subunit protein bL9 (148 aa).

The protein belongs to the bacterial ribosomal protein bL9 family.

In terms of biological role, binds to the 23S rRNA. This chain is Large ribosomal subunit protein bL9, found in Staphylococcus epidermidis (strain ATCC 35984 / DSM 28319 / BCRC 17069 / CCUG 31568 / BM 3577 / RP62A).